Consider the following 387-residue polypeptide: 3-ketoacyl-CoA thiolase (387 aa).

Catalysis depends on C91, which acts as the Acyl-thioester intermediate. Catalysis depends on proton acceptor residues H343 and C373.

The protein belongs to the thiolase-like superfamily. Thiolase family. Heterotetramer of two alpha chains (FadB) and two beta chains (FadA).

It localises to the cytoplasm. It carries out the reaction an acyl-CoA + acetyl-CoA = a 3-oxoacyl-CoA + CoA. It functions in the pathway lipid metabolism; fatty acid beta-oxidation. Catalyzes the final step of fatty acid oxidation in which acetyl-CoA is released and the CoA ester of a fatty acid two carbons shorter is formed. The chain is 3-ketoacyl-CoA thiolase from Serratia proteamaculans (strain 568).